Consider the following 119-residue polypeptide: Ribonuclease P protein component (119 aa).

It belongs to the RnpA family. As to quaternary structure, consists of a catalytic RNA component (M1 or rnpB) and a protein subunit.

The catalysed reaction is Endonucleolytic cleavage of RNA, removing 5'-extranucleotides from tRNA precursor.. Its function is as follows. RNaseP catalyzes the removal of the 5'-leader sequence from pre-tRNA to produce the mature 5'-terminus. It can also cleave other RNA substrates such as 4.5S RNA. The protein component plays an auxiliary but essential role in vivo by binding to the 5'-leader sequence and broadening the substrate specificity of the ribozyme. The protein is Ribonuclease P protein component of Streptococcus pyogenes serotype M5 (strain Manfredo).